The primary structure comprises 74 residues: Mitochondrial import receptor subunit TOM6 homolog (74 aa).

A compositionally biased stretch (low complexity) spans Met-1–Ala-14. The segment at Met-1 to Val-24 is disordered. The residue at position 2 (Ala-2) is an N-acetylalanine.

The protein belongs to the Tom6 family. In terms of assembly, forms part of the preprotein translocase complex of the outer mitochondrial membrane (TOM complex) which consists of at least 7 different proteins (TOMM5, TOMM6, TOMM7, TOMM20, TOMM22, TOMM40 and TOMM70).

Its subcellular location is the mitochondrion outer membrane. The polypeptide is Mitochondrial import receptor subunit TOM6 homolog (TOMM6) (Bos taurus (Bovine)).